We begin with the raw amino-acid sequence, 444 residues long: Probable glycine dehydrogenase (decarboxylating) subunit 1 (444 aa).

This sequence belongs to the GcvP family. N-terminal subunit subfamily. The glycine cleavage system is composed of four proteins: P, T, L and H. In this organism, the P 'protein' is a heterodimer of two subunits.

The enzyme catalyses N(6)-[(R)-lipoyl]-L-lysyl-[glycine-cleavage complex H protein] + glycine + H(+) = N(6)-[(R)-S(8)-aminomethyldihydrolipoyl]-L-lysyl-[glycine-cleavage complex H protein] + CO2. The glycine cleavage system catalyzes the degradation of glycine. The P protein binds the alpha-amino group of glycine through its pyridoxal phosphate cofactor; CO(2) is released and the remaining methylamine moiety is then transferred to the lipoamide cofactor of the H protein. The sequence is that of Probable glycine dehydrogenase (decarboxylating) subunit 1 from Moorella thermoacetica (strain ATCC 39073 / JCM 9320).